The primary structure comprises 462 residues: tRNA(Ile)-lysidine synthase (462 aa).

31–36 (SGGRDS) provides a ligand contact to ATP.

Belongs to the tRNA(Ile)-lysidine synthase family.

The protein localises to the cytoplasm. It carries out the reaction cytidine(34) in tRNA(Ile2) + L-lysine + ATP = lysidine(34) in tRNA(Ile2) + AMP + diphosphate + H(+). In terms of biological role, ligates lysine onto the cytidine present at position 34 of the AUA codon-specific tRNA(Ile) that contains the anticodon CAU, in an ATP-dependent manner. Cytidine is converted to lysidine, thus changing the amino acid specificity of the tRNA from methionine to isoleucine. In Ralstonia nicotianae (strain ATCC BAA-1114 / GMI1000) (Ralstonia solanacearum), this protein is tRNA(Ile)-lysidine synthase.